The sequence spans 99 residues: Transcriptional regulator WhiB2 (99 aa).

The 4Fe-4S Wbl-type domain maps to 33 to 90; sequence LCAQTDPEAFFPEKGGSTRDAKRVCAKCEVREQCLKWAIDHDERFGIWGGMSERERRR. Positions 34, 57, 60, and 66 each coordinate [4Fe-4S] cluster.

Belongs to the WhiB family. [4Fe-4S] cluster serves as cofactor. Post-translationally, the Fe-S cluster can be nitrosylated by nitric oxide (NO). In terms of processing, upon Fe-S cluster removal intramolecular disulfide bonds are formed.

It is found in the cytoplasm. Functionally, acts as a transcriptional regulator. Probably redox-responsive. The apo- but not holo-form probably binds DNA. In Bifidobacterium longum (strain NCC 2705), this protein is Transcriptional regulator WhiB2 (whiB2).